The primary structure comprises 407 residues: Imidazolonepropionase (407 aa).

The Fe(3+) site is built by His74 and His76. The Zn(2+) site is built by His74 and His76. 3 residues coordinate 4-imidazolone-5-propanoate: Arg83, Tyr146, and His179. Tyr146 serves as a coordination point for N-formimidoyl-L-glutamate. Residue His244 participates in Fe(3+) binding. His244 lines the Zn(2+) pocket. Residue Gln247 participates in 4-imidazolone-5-propanoate binding. A Fe(3+)-binding site is contributed by Asp319. Asp319 is a Zn(2+) binding site. N-formimidoyl-L-glutamate is bound by residues Asn321 and Gly323. Thr324 contacts 4-imidazolone-5-propanoate.

It belongs to the metallo-dependent hydrolases superfamily. HutI family. Requires Zn(2+) as cofactor. It depends on Fe(3+) as a cofactor.

It is found in the cytoplasm. It carries out the reaction 4-imidazolone-5-propanoate + H2O = N-formimidoyl-L-glutamate. Its pathway is amino-acid degradation; L-histidine degradation into L-glutamate; N-formimidoyl-L-glutamate from L-histidine: step 3/3. Its function is as follows. Catalyzes the hydrolytic cleavage of the carbon-nitrogen bond in imidazolone-5-propanoate to yield N-formimidoyl-L-glutamate. It is the third step in the universal histidine degradation pathway. This chain is Imidazolonepropionase, found in Salmonella schwarzengrund (strain CVM19633).